An 88-amino-acid chain; its full sequence is Cell division topological specificity factor (88 aa).

Belongs to the MinE family.

Its function is as follows. Prevents the cell division inhibition by proteins MinC and MinD at internal division sites while permitting inhibition at polar sites. This ensures cell division at the proper site by restricting the formation of a division septum at the midpoint of the long axis of the cell. The chain is Cell division topological specificity factor from Aromatoleum aromaticum (strain DSM 19018 / LMG 30748 / EbN1) (Azoarcus sp. (strain EbN1)).